A 313-amino-acid chain; its full sequence is D-apiose import binding protein (313 aa).

Residues 1 to 26 form the signal peptide; sequence MKLTRRLTLAAFASVLALGTAAPAFS. D-apiofuranose-binding positions include asparagine 39, 115–116, 162–164, arginine 168, asparagine 218, aspartate 243, and glutamine 263; these read DR and DTN.

This sequence belongs to the bacterial solute-binding protein 2 family.

It localises to the periplasm. Part of an ABC transporter complex involved in D-apiose import. This chain is D-apiose import binding protein, found in Rhizobium rhizogenes (strain K84 / ATCC BAA-868) (Agrobacterium radiobacter).